Reading from the N-terminus, the 232-residue chain is Large ribosomal subunit protein uL1 (232 aa).

The protein belongs to the universal ribosomal protein uL1 family. In terms of assembly, part of the 50S ribosomal subunit.

Its function is as follows. Binds directly to 23S rRNA. The L1 stalk is quite mobile in the ribosome, and is involved in E site tRNA release. Functionally, protein L1 is also a translational repressor protein, it controls the translation of the L11 operon by binding to its mRNA. The protein is Large ribosomal subunit protein uL1 of Pelotomaculum thermopropionicum (strain DSM 13744 / JCM 10971 / SI).